A 907-amino-acid polypeptide reads, in one-letter code: Anaphase-promoting complex subunit 2 (907 aa).

Disordered regions lie at residues 203 to 228 (NNSK…EEES) and 790 to 838 (NKEK…AKEK). Acidic residues-rich tracts occupy residues 214–226 (QQEE…ENEE) and 804–830 (ENDD…EEEE).

The protein belongs to the cullin family. As to quaternary structure, the APC/C is composed of at least 13 subunits that stay tightly associated throughout the cell cycle: anapc1, anapc2, anapc3, anapc4, anapc5, anapc6, anapc7, anapc8, anapc10, anapc11, cdc20, cdc26 and cdh1.

Its subcellular location is the nucleus. The protein operates within protein modification; protein ubiquitination. Component of the anaphase promoting complex/cyclosome (APC/C), a cell cycle-regulated E3 ubiquitin-protein ligase complex that controls progression through mitosis and the G1 phase of the cell cycle. The chain is Anaphase-promoting complex subunit 2 (anapc2) from Dictyostelium discoideum (Social amoeba).